Consider the following 345-residue polypeptide: NADH-ubiquinone oxidoreductase chain 2 (345 aa).

The next 10 helical transmembrane spans lie at methionine 1–methionine 21, histidine 25–serine 45, tyrosine 59–tyrosine 79, isoleucine 96–proline 116, proline 123–isoleucine 143, leucine 148–glycine 168, isoleucine 191–leucine 211, threonine 240–phenylalanine 260, histidine 274–leucine 294, and serine 324–isoleucine 344.

It belongs to the complex I subunit 2 family.

It localises to the mitochondrion inner membrane. It carries out the reaction a ubiquinone + NADH + 5 H(+)(in) = a ubiquinol + NAD(+) + 4 H(+)(out). Core subunit of the mitochondrial membrane respiratory chain NADH dehydrogenase (Complex I) that is believed to belong to the minimal assembly required for catalysis. Complex I functions in the transfer of electrons from NADH to the respiratory chain. The immediate electron acceptor for the enzyme is believed to be ubiquinone. The chain is NADH-ubiquinone oxidoreductase chain 2 (MT-ND2) from Varanus timorensis (Timor monitor).